We begin with the raw amino-acid sequence, 380 residues long: Endo-polygalacturonase (380 aa).

An N-terminal signal peptide occupies residues 1–17; that stretch reads MVHILSSALSLLRLGAA. Positions 18 to 42 are excised as a propeptide; that stretch reads VSAAPAPAPTAAPNVADALAAVEKR. Cysteines 46 and 64 form a disulfide. PbH1 repeat units lie at residues 178-207, 208-229, 230-250, 259-280, 288-310, and 322-343; these read ASGL…DVGS, STDI…AINS, GTGI…SIGS, VSDV…RIKT, VSGV…VIEQ, and TSGV…SSSA. D222 acts as the Proton donor in catalysis. A disulfide bridge links C224 with C240. H244 is an active-site residue. C350 and C353 are disulfide-bonded. N361 carries an N-linked (GlcNAc...) asparagine glycan. The cysteines at positions 371 and 380 are disulfide-linked.

It belongs to the glycosyl hydrolase 28 family.

It localises to the secreted. It catalyses the reaction (1,4-alpha-D-galacturonosyl)n+m + H2O = (1,4-alpha-D-galacturonosyl)n + (1,4-alpha-D-galacturonosyl)m.. In Sclerotinia sclerotiorum (White mold), this protein is Endo-polygalacturonase (PG1).